The following is a 270-amino-acid chain: uncharacterized protein (270 aa).

Residue 30–55 (ATGSLGRVAARALADAGARLTLAGGN) coordinates NADP(+). Ser-157 contacts substrate. The active-site Proton acceptor is the Tyr-171.

The protein belongs to the short-chain dehydrogenases/reductases (SDR) family.

This is an uncharacterized protein from Mycobacterium tuberculosis (strain CDC 1551 / Oshkosh).